Reading from the N-terminus, the 405-residue chain is Formate-dependent phosphoribosylglycinamide formyltransferase (405 aa).

N(1)-(5-phospho-beta-D-ribosyl)glycinamide-binding positions include 22 to 23 and E82; that span reads EL. ATP-binding positions include R115, K162, 167–172, 202–205, and E210; these read SSGKGQ and EGFI. An ATP-grasp domain is found at 120–320; the sequence is RLAAETLGLA…EFELHARAIL (201 aa). Mg(2+) is bound by residues E279 and E291. N(1)-(5-phospho-beta-D-ribosyl)glycinamide is bound by residues D298, K367, and 374–375; that span reads RR.

Belongs to the PurK/PurT family. As to quaternary structure, homodimer.

It carries out the reaction N(1)-(5-phospho-beta-D-ribosyl)glycinamide + formate + ATP = N(2)-formyl-N(1)-(5-phospho-beta-D-ribosyl)glycinamide + ADP + phosphate + H(+). It functions in the pathway purine metabolism; IMP biosynthesis via de novo pathway; N(2)-formyl-N(1)-(5-phospho-D-ribosyl)glycinamide from N(1)-(5-phospho-D-ribosyl)glycinamide (formate route): step 1/1. Its function is as follows. Involved in the de novo purine biosynthesis. Catalyzes the transfer of formate to 5-phospho-ribosyl-glycinamide (GAR), producing 5-phospho-ribosyl-N-formylglycinamide (FGAR). Formate is provided by PurU via hydrolysis of 10-formyl-tetrahydrofolate. The chain is Formate-dependent phosphoribosylglycinamide formyltransferase from Delftia acidovorans (strain DSM 14801 / SPH-1).